A 1342-amino-acid polypeptide reads, in one-letter code: MVYSYTEKKRIRKDFGKRPQVLDIPYLLSIQLDSFQKFIEQDPEGQYGLEAAFRSVFPIQSYSGNSELQYVSYRLGEPVFDVKECQIRGVTYSAPLRVKLRLVIYEREAPEGTVKDIKEQEVYMGEIPLMTENGTFVINGTERVIVSQLHRSPGVFFDSDKGKTHSSGKVLYNARIIPYRGSWLDFEFDPKDNLFVRIDRRRKLPATIILRALNFTTAQILDLFFEKVVFEIRDNKLQMELVPERLRGETASFDIEANGKVYVEKARRITARHIRQLEKDGIDRIEVPVEYIAGKVVAKDYIDENTGELICAANMELSLDLLAKLSQAGHKQIETLFTNDLDHSAYISETLRVDPTSDRLSALVEIYRMMRPGEPPTREAAENLFENLFFSEDRYDLSAVGRMKFNRSLLRDEIEGSGILSKEDITEVMKKLIDIRNGKGEVDDIDHLGNRRIRSVGEMAENQFRVGLVRVERAVKERLSLGDLDTLMPQDMINAKPISAAVKEFFGSSQLSQFMDQNNPLSEITHKRRISALGPGGLTRERAGFEVRDVHPTHYGRVCPIETPEGPNIGLINSLSVYAQTNEYGFLETPYRRVRDGVVTDEINYLSAIEEGNFVIAQANSNLDEDGRFIEDLVTCRSKGESSLFSRDQVDYMDVSTQQVVSVGASLIPFLEHDDANRALMGANMQRQAVPTLRADKPLVGTGMERAVAVDSGVTSVAKRGGTVQYVDASRIVIKVNEDEMYPGEAGIDIYNLTKYTRSNQNTCINQMPCVNLGEPIERGDVLADGPSTDLGELALGQNMRVAFMPWNGYNFEDSILVSERVVQEDRFTTIHIQELACVSRDTKLGPEEITADIPNVGEAALSKLDESGIVYIGAEVTGGDILVGKVTPKGETQLTPEEKLLRAIFGEKASDVKDSSLRVPNGVSGTVIDVQVFTRDGVEKDKRALEIEEMQLKQAKKDLTEELQILEAGLFARIHAVLVSGGIEADKLSKLPRDRWLELGLTDEDKQNQLEQLAEQYDEMKSEFEKKMDAKRRKITQGDDLAPGVLKIVKVYLAVKRQIQPGDKMAGRHGNKGVISKINPIEDMPYDENGTPVDIVLNPLGVPSRMNIGQILETHLGMAAKGIGEKINAMLKKQEEVAKLREFIQKAYDLGDSVCQKVDLSTFTDDEVLRLAENLKKGMPIATPVFDGATEKEIKELLQLGGLPTSGQITLFDGRTGEQFERQVTVGYMYMLKLNHLVDDKMHARSTGSYSLVTQQPLGGKAQFGGQRFGEMEVWALEAYGAAYTLQEMLTVKSDDVNGRTKMYKNIVDGDHRMEPGMPESFNVLLKEIRSLGINIELEEE.

It belongs to the RNA polymerase beta chain family. As to quaternary structure, the RNAP catalytic core consists of 2 alpha, 1 beta, 1 beta' and 1 omega subunit. When a sigma factor is associated with the core the holoenzyme is formed, which can initiate transcription.

It catalyses the reaction RNA(n) + a ribonucleoside 5'-triphosphate = RNA(n+1) + diphosphate. DNA-dependent RNA polymerase catalyzes the transcription of DNA into RNA using the four ribonucleoside triphosphates as substrates. The chain is DNA-directed RNA polymerase subunit beta from Yersinia enterocolitica serotype O:8 / biotype 1B (strain NCTC 13174 / 8081).